The chain runs to 158 residues: MAETVEVLVPGGRATAGPPIGPALGPLGINVKAVVDDINKKTAEFNGMQVPVKIEVDDKKNVTISVGIPPTTALVMKEVGIEKGSAEPNSIIVGDLPIEAAVRIARMKLDDMLSYELKTAVKEVIGTCVSVGVTVDGKKPKEILAAISAGQYDSVLEA.

Belongs to the universal ribosomal protein uL11 family. In terms of assembly, part of the ribosomal stalk of the 50S ribosomal subunit. Interacts with L10 and the large rRNA to form the base of the stalk. L10 forms an elongated spine to which L12 dimers bind in a sequential fashion forming a multimeric L10(L12)X complex.

Its function is as follows. Forms part of the ribosomal stalk which helps the ribosome interact with GTP-bound translation factors. The sequence is that of Large ribosomal subunit protein uL11 from Methanosphaerula palustris (strain ATCC BAA-1556 / DSM 19958 / E1-9c).